The chain runs to 323 residues: D-alanine--D-alanine ligase (323 aa).

The region spanning 120 to 319 is the ATP-grasp domain; that stretch reads LSVLKPYGIK…LEDLFTNAIE (200 aa). ATP is bound at residue 148–203; that stretch reads VKKVGLPCFVKPNKAGSSFGISKVKSEAELPIAIEVAYKEDNEIIIESFLDGTEVS. The Mg(2+) site is built by glutamate 274, glutamate 286, and asparagine 288.

Belongs to the D-alanine--D-alanine ligase family. Requires Mg(2+) as cofactor. It depends on Mn(2+) as a cofactor.

The protein resides in the cytoplasm. It carries out the reaction 2 D-alanine + ATP = D-alanyl-D-alanine + ADP + phosphate + H(+). The protein operates within cell wall biogenesis; peptidoglycan biosynthesis. Its function is as follows. Cell wall formation. The protein is D-alanine--D-alanine ligase of Flavobacterium johnsoniae (strain ATCC 17061 / DSM 2064 / JCM 8514 / BCRC 14874 / CCUG 350202 / NBRC 14942 / NCIMB 11054 / UW101) (Cytophaga johnsonae).